The sequence spans 250 residues: ATP synthase subunit a (250 aa).

5 helical membrane passes run 27 to 47, 83 to 103, 129 to 149, 191 to 211, and 219 to 239; these read TDTVLSTAIAALIVLALAFYL, IAPFVLPLAVTIFVFILISNW, INYVLALALFVFVCYHAAGIW, IFAGSILVALIALFPPYIMWA, and FDLFVGAIQAFIFALLTILYF.

This sequence belongs to the ATPase A chain family. In terms of assembly, F-type ATPases have 2 components, CF(1) - the catalytic core - and CF(0) - the membrane proton channel. CF(1) has five subunits: alpha(3), beta(3), gamma(1), delta(1), epsilon(1). CF(0) has three main subunits: a(1), b(2) and c(9-12). The alpha and beta chains form an alternating ring which encloses part of the gamma chain. CF(1) is attached to CF(0) by a central stalk formed by the gamma and epsilon chains, while a peripheral stalk is formed by the delta and b chains.

The protein localises to the cell membrane. Key component of the proton channel; it plays a direct role in the translocation of protons across the membrane. This is ATP synthase subunit a from Mycobacterium ulcerans (strain Agy99).